We begin with the raw amino-acid sequence, 98 residues long: MNHLQQRQLFLENLLVGVNNTFHQMQKHSINTCCQSLQKILDHLILLQTIHSPAFRLDRMQLRQMQTLACLWIHQHNHDHQAMLGAIKWISPLIKELR.

The protein belongs to the rotavirus A NSP6 family. In terms of assembly, interacts with NSP2 and NSP5.

It localises to the host cytoplasm. Its subcellular location is the host mitochondrion. The sequence is that of Non-structural protein 6 from Rotavirus A (isolate RVA/Human/United Kingdom/A64/1987/G10P11[14]) (RV-A).